The sequence spans 122 residues: Acidic phospholipase A2 Tpu-E6c (122 aa).

7 disulfide bridges follow: Cys-26–Cys-115, Cys-28–Cys-44, Cys-43–Cys-95, Cys-49–Cys-122, Cys-50–Cys-88, Cys-57–Cys-81, and Cys-75–Cys-86. Residues Tyr-27, Gly-29, and Gly-31 each coordinate Ca(2+). His-47 is an active-site residue. Position 48 (Asp-48) interacts with Ca(2+). Asp-89 is an active-site residue.

Monomer. Ca(2+) serves as cofactor. As to expression, expressed by the venom gland.

It is found in the secreted. It carries out the reaction a 1,2-diacyl-sn-glycero-3-phosphocholine + H2O = a 1-acyl-sn-glycero-3-phosphocholine + a fatty acid + H(+). Snake venom phospholipase A2 (PLA2) that impairs hemostasis. It weakly inhibits ADP-induced platelet aggregation when tested on platelet rich plasma from human and rabbit blood (15-25% of inhibition at 5-10 ug of enzyme), and dose-dependently inhibits blood coagulation, possibly by inhibiting thrombin activation. Exhibits high hydrolytic activities toward L-dipalmitoyl phosphatidylcholine. PLA2 catalyzes the calcium-dependent hydrolysis of the 2-acyl groups in 3-sn-phosphoglycerides. This Craspedocephalus puniceus (Flat-nosed pitviper) protein is Acidic phospholipase A2 Tpu-E6c.